A 272-amino-acid chain; its full sequence is Lectin-like protein At1g53070 (272 aa).

A signal peptide spans 1 to 23 (MKIQILCFTTLFLAIFTSQVTTA). The tract at residues 24–271 (YKFKFDYFGN…RHEIWDWTFQ (248 aa)) is legume-lectin like. N-linked (GlcNAc...) asparagine glycans are attached at residues N33, N84, and N134. The residue at position 241 (S241) is a Phosphoserine.

Belongs to the leguminous lectin family.

The protein localises to the secreted. It localises to the extracellular space. The protein resides in the apoplast. The chain is Lectin-like protein At1g53070 from Arabidopsis thaliana (Mouse-ear cress).